We begin with the raw amino-acid sequence, 191 residues long: Dephospho-CoA kinase (191 aa).

Positions 3 to 191 constitute a DPCK domain; that stretch reads AIGITGSYAS…KLIKDLECRV (189 aa). 11-16 is a binding site for ATP; sequence ASGKTF.

This sequence belongs to the CoaE family.

Its subcellular location is the cytoplasm. The enzyme catalyses 3'-dephospho-CoA + ATP = ADP + CoA + H(+). Its pathway is cofactor biosynthesis; coenzyme A biosynthesis; CoA from (R)-pantothenate: step 5/5. Catalyzes the phosphorylation of the 3'-hydroxyl group of dephosphocoenzyme A to form coenzyme A. The protein is Dephospho-CoA kinase of Rickettsia prowazekii (strain Madrid E).